A 300-amino-acid chain; its full sequence is uncharacterized protein (300 aa).

8 consecutive transmembrane segments (helical) span residues 13-35 (LLCI…LQPL), 45-67 (MLTM…SLLS), 80-102 (WVLF…WAPL), 106-128 (GINI…WAWL), 180-202 (IPAL…IYIL), 217-236 (YWLL…SANL), 243-265 (PVSI…AVFV), and 275-294 (YFTY…EGLL).

This sequence belongs to the EamA transporter family.

The protein localises to the cell membrane. This is an uncharacterized protein from Haemophilus influenzae (strain ATCC 51907 / DSM 11121 / KW20 / Rd).